The following is a 510-amino-acid chain: NAD(P)H-quinone oxidoreductase subunit 2 B, chloroplastic (510 aa).

Helical transmembrane passes span 24–44, 57–77, 99–119, 124–144, 149–169, 183–203, 227–247, 295–315, 323–343, 354–374, 395–415, 418–438, and 484–504; these read LLLF…GLIL, IPWL…ALLF, IFQF…VEYI, MAIT…MFLC, LITI…LSGY, YLLM…WLYG, PGIS…LSPA, WHLL…LIAI, MLAY…IVGD, YMLF…LFGL, ALSL…AGFF, LYLF…IGLL, and MIVC…IIAI.

It belongs to the complex I subunit 2 family. NDH is composed of at least 16 different subunits, 5 of which are encoded in the nucleus.

It is found in the plastid. The protein resides in the chloroplast thylakoid membrane. The enzyme catalyses a plastoquinone + NADH + (n+1) H(+)(in) = a plastoquinol + NAD(+) + n H(+)(out). It carries out the reaction a plastoquinone + NADPH + (n+1) H(+)(in) = a plastoquinol + NADP(+) + n H(+)(out). Functionally, NDH shuttles electrons from NAD(P)H:plastoquinone, via FMN and iron-sulfur (Fe-S) centers, to quinones in the photosynthetic chain and possibly in a chloroplast respiratory chain. The immediate electron acceptor for the enzyme in this species is believed to be plastoquinone. Couples the redox reaction to proton translocation, and thus conserves the redox energy in a proton gradient. This is NAD(P)H-quinone oxidoreductase subunit 2 B, chloroplastic from Daucus carota (Wild carrot).